The following is a 560-amino-acid chain: Calnexin homolog (560 aa).

Residues 1–22 (MKYGKVSFLALLCSLYVRGSLA) form the signal peptide. At 23–489 (DPESEQEPLV…ETIIETPEIG (467 aa)) the chain is on the lumenal side. Cysteine 132 and cysteine 163 are joined by a disulfide. An alpha-D-glucoside-binding residues include tyrosine 136, lysine 138, tyrosine 154, and aspartate 161. The tract at residues 242-375 (IYDPEDIKPA…RKIPNPDYFD (134 aa)) is p domain (Extended arm). 5 tandem repeats follow at residues 244-255 (DPEDIKPADWVD), 261-272 (DPNAVKPDDWDE), 280-291 (DPDAVKPEDWLE), 299-310 (DPEAQKPEDWDD), and 314-324 (GDWIPSEIINP). 2 4 X approximate repeats regions span residues 244-310 (DPED…DWDD) and 314-371 (GDWI…IPNP). The interval 253-273 (WVDEPEIPDPNAVKPDDWDED) is disordered. An intrachain disulfide couples cysteine 326 to cysteine 332. 3 repeat units span residues 333–343 (GEWKPPMIRNP), 347–357 (GPWSPPMIPNP), and 361–371 (GEWYPRKIPNP). Glutamate 391 lines the an alpha-D-glucoside pocket. Residue asparagine 418 is glycosylated (N-linked (GlcNAc...) asparagine). A helical transmembrane segment spans residues 490 to 512 (IAIVAVLGSLTAVILTCYFYFFA). Topologically, residues 513–560 (SSSPASLSTGTTEAEKEQQEKFKQETETEKIDVSYAPETESPTAKNED) are cytoplasmic. Residues 517 to 560 (ASLSTGTTEAEKEQQEKFKQETETEKIDVSYAPETESPTAKNED) form a disordered region. Residues 525 to 544 (EAEKEQQEKFKQETETEKID) are compositionally biased toward basic and acidic residues. Position 551 is a phosphothreonine (threonine 551). Residue serine 553 is modified to Phosphoserine. Threonine 555 is modified (phosphothreonine).

This sequence belongs to the calreticulin family.

Its subcellular location is the endoplasmic reticulum membrane. In terms of biological role, calcium-binding protein that interacts with newly synthesized monoglucosylated glycoproteins in the endoplasmic reticulum. It may act in assisting protein assembly and/or in the retention within the ER of unassembled protein subunits. It seems to play a major role in the quality control apparatus of the ER by the retention of incorrectly folded proteins. The protein is Calnexin homolog (cal1) of Schizosaccharomyces pombe (strain 972 / ATCC 24843) (Fission yeast).